The sequence spans 223 residues: MPARQSFKDLKDLILCDIGNTRIHFAQNYQLFSSAKEDLKRLGIQKEIFYISVNEENEKALLNCYPNAKNIAGFFHLETDYIGLGIDRQMACLAVVNGVIVDAGSAITIDLVKEGKHLGGCILPGLAQYVHAYKKSAKILEQPFKALDSLEVLPKNTRDAVNYGMILSIISCIQHLAKDQKIYLCGGDAKYLSAFLPHSVCKERLVFDGMEIALKKAGILECK.

Residue 17-24 participates in ATP binding; sequence DIGNTRIH. Residues tyrosine 81 and 85-88 contribute to the substrate site; that span reads GIDR. Catalysis depends on aspartate 87, which acts as the Proton acceptor. Residue aspartate 102 participates in K(+) binding. Residue serine 105 participates in ATP binding. Threonine 157 lines the substrate pocket.

It belongs to the type III pantothenate kinase family. Homodimer. The cofactor is NH4(+). K(+) is required as a cofactor.

It is found in the cytoplasm. It carries out the reaction (R)-pantothenate + ATP = (R)-4'-phosphopantothenate + ADP + H(+). It participates in cofactor biosynthesis; coenzyme A biosynthesis; CoA from (R)-pantothenate: step 1/5. In terms of biological role, catalyzes the phosphorylation of pantothenate (Pan), the first step in CoA biosynthesis. The sequence is that of Type III pantothenate kinase from Helicobacter pylori (strain J99 / ATCC 700824) (Campylobacter pylori J99).